The chain runs to 427 residues: 3-phosphoshikimate 1-carboxyvinyltransferase (427 aa).

3-phosphoshikimate contacts are provided by Lys22, Ser23, and Arg27. Lys22 contributes to the phosphoenolpyruvate binding site. Positions 96 and 124 each coordinate phosphoenolpyruvate. Residues Ser169, Ser170, Gln171, Ser197, Asp313, Asn336, and Lys340 each coordinate 3-phosphoshikimate. Gln171 contributes to the phosphoenolpyruvate binding site. Asp313 functions as the Proton acceptor in the catalytic mechanism. 3 residues coordinate phosphoenolpyruvate: Arg344, Arg386, and Lys411.

It belongs to the EPSP synthase family. As to quaternary structure, monomer.

It localises to the cytoplasm. It carries out the reaction 3-phosphoshikimate + phosphoenolpyruvate = 5-O-(1-carboxyvinyl)-3-phosphoshikimate + phosphate. Its pathway is metabolic intermediate biosynthesis; chorismate biosynthesis; chorismate from D-erythrose 4-phosphate and phosphoenolpyruvate: step 6/7. Its function is as follows. Catalyzes the transfer of the enolpyruvyl moiety of phosphoenolpyruvate (PEP) to the 5-hydroxyl of shikimate-3-phosphate (S3P) to produce enolpyruvyl shikimate-3-phosphate and inorganic phosphate. The sequence is that of 3-phosphoshikimate 1-carboxyvinyltransferase from Salmonella dublin (strain CT_02021853).